The sequence spans 285 residues: Bifunctional protein FolD (285 aa).

Residues 164–166 (GAS), I189, and I230 each bind NADP(+).

It belongs to the tetrahydrofolate dehydrogenase/cyclohydrolase family. Homodimer.

The enzyme catalyses (6R)-5,10-methylene-5,6,7,8-tetrahydrofolate + NADP(+) = (6R)-5,10-methenyltetrahydrofolate + NADPH. It carries out the reaction (6R)-5,10-methenyltetrahydrofolate + H2O = (6R)-10-formyltetrahydrofolate + H(+). It participates in one-carbon metabolism; tetrahydrofolate interconversion. Functionally, catalyzes the oxidation of 5,10-methylenetetrahydrofolate to 5,10-methenyltetrahydrofolate and then the hydrolysis of 5,10-methenyltetrahydrofolate to 10-formyltetrahydrofolate. In Sulfurimonas denitrificans (strain ATCC 33889 / DSM 1251) (Thiomicrospira denitrificans (strain ATCC 33889 / DSM 1251)), this protein is Bifunctional protein FolD.